A 411-amino-acid polypeptide reads, in one-letter code: KIN17-like protein (411 aa).

The segment at 28 to 50 (CQMCQKQCRDENGFKCHCMSESH) adopts a C2H2-type zinc-finger fold. Residues 51–160 (QRQMQVFGQN…KERLKNKRVK (110 aa)) form a winged helix-turn-helix (wHTH) region. Residues 147–183 (ETLFKERLKNKRVKSDLAEEEKQEREIQRQIERAAEK) adopt a coiled-coil conformation. Disordered regions lie at residues 182–211 (EKLN…KKDE) and 232–286 (VATG…EEEK). Residues 253 to 286 (KVERGEKRKRSGDSGRSEKERRSALDELMKEEEK) show a composition bias toward basic and acidic residues. The short motif at 259 to 262 (KRKR) is the Nuclear localization signal (NLS) element. Positions 265 to 294 (DSGRSEKERRSALDELMKEEEKKKERMNRK) form a coiled coil. Positions 301 to 352 (GIIVKVMSKALAEKGYYKQKGVVKKVIDNYVGEIKMLDSKHVLRVDQKELET) are C-terminal subdomain A. The interval 358–409 (GGMVKIVNGAYRGSNARLLGVDTEKFCAKVQIEKGVYDGRVIKSIEYEDICK) is C-terminal subdomain B.

This sequence belongs to the KIN17 family. As to quaternary structure, interacts with SPL7. As to expression, expressed in root vasculature, lateral roots, cotyledons, rosette leaves, cauline leaves, stems, sepals, style of pistils, mature pollen grains and siliques.

Its subcellular location is the nucleus speckle. Functionally, promotes the copper deficiency response by direct interaction with SPL7. Acts with SPL7 in a common pathway to promote copper-responsive genes and alleviate oxidative stress during copper-limiting periods. May promote SPL7 function when copper is limiting. Participates in the control of general plant growth and development, and in the response to counteract the negative effects of UV radiation. The polypeptide is KIN17-like protein (Arabidopsis thaliana (Mouse-ear cress)).